A 349-amino-acid polypeptide reads, in one-letter code: Twinfilin-2 (349 aa).

Residue Ala2 is modified to N-acetylalanine. 2 ADF-H domains span residues Gln4 to Ser139 and Gly177 to His313. Lys14 carries the N6-acetyllysine modification. Tyr309 carries the post-translational modification Phosphotyrosine. The segment at Ala322–Ser349 is disordered. Basic residues predominate over residues Gly330–Ile339. Ser349 bears the Phosphoserine mark.

This sequence belongs to the actin-binding proteins ADF family. Twinfilin subfamily. Interacts with G-actin; ADP-actin form and capping protein (CP). May also be able to interact with TWF1 and phosphoinositides, PI(4,5)P2. When bound to PI(4,5)P2, it is down-regulated. Interacts with MYO7A. Post-translationally, in vitro, phosphorylated by PRKCZ, CK2 and SRC. Ubiquitously expressed (at protein level).

It localises to the cytoplasm. The protein localises to the cytoskeleton. It is found in the perinuclear region. Its subcellular location is the cell projection. The protein resides in the stereocilium. Its function is as follows. Actin-binding protein involved in motile and morphological processes. Inhibits actin polymerization, likely by sequestering G-actin. By capping the barbed ends of filaments, it also regulates motility. Seems to play an important role in clathrin-mediated endocytosis and distribution of endocytic organelles. May play a role in regulating the mature length of the middle and short rows of stereocilia. This Homo sapiens (Human) protein is Twinfilin-2 (TWF2).